Reading from the N-terminus, the 275-residue chain is Lectin 8 (275 aa).

The N-terminal stretch at 1 to 31 (MANSNPKLLVTQNPFSVFLLTFLLLITNVKS) is a signal peptide. N-linked (GlcNAc...) asparagine glycans are attached at residues N55 and N150.

It belongs to the leguminous lectin family.

In terms of biological role, may be involved in arbuscular mycorrhizal (AM) symbiosis with AM fungi. The polypeptide is Lectin 8 (Medicago truncatula (Barrel medic)).